We begin with the raw amino-acid sequence, 221 residues long: Max dimerization protein 1 (221 aa).

The Nuclear localization signal signature appears at 21–49; it reads RREREAEHGYASMLPYNSKERDGLKRKSK. 2 disordered regions span residues 28–67 and 176–202; these read HGYA…EKNR and DWSS…DEGY. Residues 55 to 107 form the bHLH domain; sequence NSRSTHNEMEKNRRAHLRLCLEKLKILVPLGPESNRHTTLSLLTRAKSHIKKL. The span at 192–202 shows a compositional bias: polar residues; sequence SMQSICSDEGY.

Efficient DNA binding requires dimerization with another bHLH protein. Binds DNA as a heterodimer with MAX.

It localises to the nucleus. Transcriptional repressor. MAD binds with MAX to form a sequence-specific DNA-binding protein complex which recognizes the core sequence 5'-CAC[GA]TG-3'. MAD thus antagonizes MYC transcriptional activity by competing for MAX. The polypeptide is Max dimerization protein 1 (mxd1) (Xenopus tropicalis (Western clawed frog)).